We begin with the raw amino-acid sequence, 308 residues long: MQEIENLHQSVLLQEVLQAFTPLEEGVLIDCTLGLGGHSKALLSQKPHLKLIGIDKDKFAQEIAKERLKAFEGRYNLLSGGFAKRFKEALETHNKEIKGVLVDLGVSSLQLDDDDRGFNFHSHALDMRMDLKSDLNAQKVINSYPVIALEKIFRDYGEIKEYKKIAHKIAERRTKKPFKDAKDLSEFLSSFSKNKKIHPATLVFQAVRIEVNSELEELKEFLQCARNLKGAILCVISFHSLEDGLVKNAFKDYAKNCICDPLSFKCACSNNHALGEILTKKPITPSPEEIKNNRRSRSAKMRVFKFKP.

S-adenosyl-L-methionine is bound by residues 36–38, Asp55, Phe86, Asp103, and Gln110; that span reads GGH.

Belongs to the methyltransferase superfamily. RsmH family.

The protein localises to the cytoplasm. The enzyme catalyses cytidine(1402) in 16S rRNA + S-adenosyl-L-methionine = N(4)-methylcytidine(1402) in 16S rRNA + S-adenosyl-L-homocysteine + H(+). Its function is as follows. Specifically methylates the N4 position of cytidine in position 1402 (C1402) of 16S rRNA. This is Ribosomal RNA small subunit methyltransferase H from Helicobacter pylori (strain B38).